We begin with the raw amino-acid sequence, 351 residues long: MYSLFRPLLFTCDTERAHDISLCTLDIAYHSGALPLLTRHPRPLPTTAFGLNFPNPVGLAAGLDKNGTHIDALFALGFGFIEIGTTTPRPQPGNPKPRLFRLTQQQAVINRMGFNNLGVDALVRNVAGARQRNGPLGINIGKNKDTPNEQASNDYRYCLERVYALADYVTINLSSPNTAGLRALQEEQTLRRLIGELREAQETLAAKHGRHVPMLIKMAPDLSDSDIDAAARVLNEMSVDGVIATNTTVTRPLLRQHRLASETGGLSGAPLLGQSTLVLRRLRTHLPETIALIGVGGICCGADAVAKMAAGANLVQCYTGLIFKGPQLVGECVEAIRRRREASSSGRASTQ.

Residues 61-65 (AGLDK) and threonine 85 each bind FMN. Position 65 (lysine 65) interacts with substrate. 110–114 (NRMGF) is a binding site for substrate. Residues asparagine 139 and asparagine 172 each contribute to the FMN site. Residue asparagine 172 coordinates substrate. Serine 175 functions as the Nucleophile in the catalytic mechanism. Asparagine 177 is a binding site for substrate. FMN is bound by residues lysine 217 and threonine 245. A substrate-binding site is contributed by 246–247 (NT). FMN-binding positions include glycine 268, glycine 297, and 318 to 319 (YT).

Belongs to the dihydroorotate dehydrogenase family. Type 2 subfamily. Monomer. The cofactor is FMN.

It is found in the cell membrane. It carries out the reaction (S)-dihydroorotate + a quinone = orotate + a quinol. The protein operates within pyrimidine metabolism; UMP biosynthesis via de novo pathway; orotate from (S)-dihydroorotate (quinone route): step 1/1. In terms of biological role, catalyzes the conversion of dihydroorotate to orotate with quinone as electron acceptor. This is Dihydroorotate dehydrogenase (quinone) from Xylella fastidiosa (strain 9a5c).